We begin with the raw amino-acid sequence, 261 residues long: Hydroxyethylthiazole kinase (261 aa).

Methionine 38 contributes to the substrate binding site. Arginine 114 and threonine 159 together coordinate ATP. Glycine 186 serves as a coordination point for substrate.

The protein belongs to the Thz kinase family. Mg(2+) is required as a cofactor.

It carries out the reaction 5-(2-hydroxyethyl)-4-methylthiazole + ATP = 4-methyl-5-(2-phosphooxyethyl)-thiazole + ADP + H(+). Its pathway is cofactor biosynthesis; thiamine diphosphate biosynthesis; 4-methyl-5-(2-phosphoethyl)-thiazole from 5-(2-hydroxyethyl)-4-methylthiazole: step 1/1. Functionally, catalyzes the phosphorylation of the hydroxyl group of 4-methyl-5-beta-hydroxyethylthiazole (THZ). This chain is Hydroxyethylthiazole kinase, found in Streptococcus suis (strain 05ZYH33).